Reading from the N-terminus, the 73-residue chain is Photosystem I reaction center subunit IV (73 aa).

It belongs to the PsaE family.

It is found in the cellular thylakoid membrane. Stabilizes the interaction between PsaC and the PSI core, assists the docking of the ferredoxin to PSI and interacts with ferredoxin-NADP oxidoreductase. The polypeptide is Photosystem I reaction center subunit IV (Synechococcus sp. (strain JA-3-3Ab) (Cyanobacteria bacterium Yellowstone A-Prime)).